The following is a 266-amino-acid chain: Ras-like protein family member 12 (266 aa).

GTP is bound by residues 27–34 (GRRGAGKS), 74–78 (DTADL), and 134–137 (NKLD).

This sequence belongs to the small GTPase superfamily. Ras family.

It catalyses the reaction GTP + H2O = GDP + phosphate + H(+). The protein is Ras-like protein family member 12 (Rasl12) of Mus musculus (Mouse).